A 55-amino-acid polypeptide reads, in one-letter code: Large ribosomal subunit protein bL33 (55 aa).

This sequence belongs to the bacterial ribosomal protein bL33 family.

The protein is Large ribosomal subunit protein bL33 of Buchnera aphidicola subsp. Baizongia pistaciae (strain Bp).